The sequence spans 100 residues: U-myrmeciitoxin(01)-Mg7c (100 aa).

Positions 1–17 (MKLSYLSLALAIILVLA) are cleaved as a signal peptide. Positions 18-50 (IVYSPHMEVKALADAEPDAIGFADAFGEADAEP) are excised as a propeptide. Residue Ser85 is glycosylated (O-linked (GalNAc...) serine). Residues Thr94 and Thr95 are each glycosylated (O-linked (GalNAc...) threonine).

The protein belongs to the formicidae venom precursor-01 superfamily. In terms of processing, glycosylation is critical to maintaining the aqueous solubility of this protein, but does not directly contribute to its activity. Expressed by the venom gland.

The protein localises to the secreted. The protein resides in the target cell membrane. Neurotoxin that triggers pain behavior and inflammation in mammals, and is paralytic and lethal to insects. Causes a time-dependent increase in cell leak current. May act by targeting membranes. The protein is U-myrmeciitoxin(01)-Mg7c of Myrmecia gulosa (Red bulldog ant).